Here is a 446-residue protein sequence, read N- to C-terminus: Coagulation factor VII (446 aa).

An N-terminal signal peptide occupies residues 1 to 24 (MVPQAHGLLLLCFLLQLQGPLGTA). The propeptide occupies 25–41 (VFITQEEAHGVLHRQRR). The 45-residue stretch at 42–86 (ANSLLEELWPGSLERECNEEQCSFEEAREIFKSPERTKQFWIVYS) folds into the Gla domain. Glu-47, Glu-48, Glu-55, Glu-57, Glu-60, Glu-61, Glu-66, Glu-67, Glu-70, and Glu-76 each carry 4-carboxyglutamate. Cys-58 and Cys-63 are disulfide-bonded. The 37-residue stretch at 87–123 (DGDQCASNPCQNGGTCQDHLKSYVCFCLLDFEGRNCE) folds into the EGF-like 1; calcium-binding domain. Cystine bridges form between Cys-91–Cys-102, Cys-96–Cys-111, Cys-113–Cys-122, Cys-132–Cys-143, Cys-139–Cys-153, Cys-155–Cys-168, Cys-176–Cys-303, Cys-200–Cys-205, Cys-219–Cys-235, and Cys-351–Cys-370. Ser-93 carries O-linked (Glc...) serine; alternate glycosylation. Ser-93 carries an O-linked (Xyl...) serine; alternate glycan. Asp-104 is subject to (3R)-3-hydroxyaspartate. Residues 128–169 (EQLICANENGDCDQYCRDHVGTKRTCSCHEDYTLQPDEVSCK) form the EGF-like 2 domain. N-linked (GlcNAc...) asparagine glycosylation occurs at Asn-186. Residues 194-433 (IVGGNVCPKG…YIDWLVRHMD (240 aa)) enclose the Peptidase S1 domain. His-234 acts as the Charge relay system in catalysis. N-linked (GlcNAc...) asparagine glycosylation is present at Asn-244. The Charge relay system role is filled by Asp-283. A substrate-binding site is contributed by Asp-379. Cys-381 and Cys-409 are disulfide-bonded. Ser-385 serves as the catalytic Charge relay system.

This sequence belongs to the peptidase S1 family. In terms of assembly, heterodimer of a light chain and a heavy chain linked by a disulfide bond. Post-translationally, the vitamin K-dependent, enzymatic carboxylation of some glutamate residues allows the modified protein to bind calcium. In terms of processing, the iron and 2-oxoglutarate dependent 3-hydroxylation of aspartate and asparagine is (R) stereospecific within EGF domains. Can be either O-glucosylated or O-xylosylated at Ser-93 by POGLUT1. As to expression, plasma and liver.

The protein localises to the secreted. The enzyme catalyses Selective cleavage of Arg-|-Ile bond in factor X to form factor Xa.. Its function is as follows. Initiates the extrinsic pathway of blood coagulation. Serine protease that circulates in the blood in a zymogen form. Factor VII is converted to factor VIIa by factor Xa, factor XIIa, factor IXa, or thrombin by minor proteolysis. In the presence of tissue factor and calcium ions, factor VIIa then converts factor X to factor Xa by limited proteolysis. Factor VIIa also converts factor IX to factor IXa in the presence of tissue factor and calcium. The protein is Coagulation factor VII (F7) of Mus musculus (Mouse).